The chain runs to 291 residues: MKKIDSWLTKHGLKNRLTLVVIVIFIIFLILLFMFVNLSDEDTGQITITENAELRTGPNAAYPVIYKIEKGESFKKIDRKGKWIEVQNHAGTEKGWVAGWHTNLNIPADQSLSSNPLKGKTIVLDPGHGGSDQGASSSTPSKSLEKNYTLKTAKELKKLLNKEGAHVKMTRSNDKYVSLDDRNIKGDAFISIHNDALDSSNANGVTVYWFKDKQETLAQTLNSAIQKKALLTNRGSRQQNYQVLRQTDIPAVLLELGYISNPTDESMINDQLHRQVVEQAIVDGLKQYFSS.

The N-terminal stretch at 1–40 is a signal peptide; sequence MKKIDSWLTKHGLKNRLTLVVIVIFIIFLILLFMFVNLSD. In terms of domain architecture, SH3b spans 41 to 105; the sequence is EDTGQITITE…WVAGWHTNLN (65 aa). In terms of domain architecture, MurNAc-LAA spans 122 to 286; the sequence is IVLDPGHGGS…VEQAIVDGLK (165 aa). The interval 123-147 is disordered; sequence VLDPGHGGSDQGASSSTPSKSLEKN. Residues 133–142 are compositionally biased toward polar residues; that stretch reads QGASSSTPSK.

The protein belongs to the N-acetylmuramoyl-L-alanine amidase 3 family.

The protein localises to the secreted. Its function is as follows. Probably involved in cell-wall metabolism. The sequence is that of Probable cell wall amidase LytH (lytH) from Staphylococcus epidermidis (strain ATCC 35984 / DSM 28319 / BCRC 17069 / CCUG 31568 / BM 3577 / RP62A).